The chain runs to 316 residues: 4-hydroxy-3-methylbut-2-enyl diphosphate reductase (316 aa).

Cys12 lines the [4Fe-4S] cluster pocket. Residues His41 and His74 each coordinate (2E)-4-hydroxy-3-methylbut-2-enyl diphosphate. Residues His41 and His74 each coordinate dimethylallyl diphosphate. 2 residues coordinate isopentenyl diphosphate: His41 and His74. [4Fe-4S] cluster is bound at residue Cys96. Position 124 (His124) interacts with (2E)-4-hydroxy-3-methylbut-2-enyl diphosphate. His124 contributes to the dimethylallyl diphosphate binding site. His124 contacts isopentenyl diphosphate. Glu126 (proton donor) is an active-site residue. Thr169 contributes to the (2E)-4-hydroxy-3-methylbut-2-enyl diphosphate binding site. Position 199 (Cys199) interacts with [4Fe-4S] cluster. Positions 227, 228, 229, and 271 each coordinate (2E)-4-hydroxy-3-methylbut-2-enyl diphosphate. 4 residues coordinate dimethylallyl diphosphate: Ser227, Ser228, Asn229, and Ser271. 4 residues coordinate isopentenyl diphosphate: Ser227, Ser228, Asn229, and Ser271.

It belongs to the IspH family. The cofactor is [4Fe-4S] cluster.

It catalyses the reaction isopentenyl diphosphate + 2 oxidized [2Fe-2S]-[ferredoxin] + H2O = (2E)-4-hydroxy-3-methylbut-2-enyl diphosphate + 2 reduced [2Fe-2S]-[ferredoxin] + 2 H(+). The catalysed reaction is dimethylallyl diphosphate + 2 oxidized [2Fe-2S]-[ferredoxin] + H2O = (2E)-4-hydroxy-3-methylbut-2-enyl diphosphate + 2 reduced [2Fe-2S]-[ferredoxin] + 2 H(+). The protein operates within isoprenoid biosynthesis; dimethylallyl diphosphate biosynthesis; dimethylallyl diphosphate from (2E)-4-hydroxy-3-methylbutenyl diphosphate: step 1/1. It functions in the pathway isoprenoid biosynthesis; isopentenyl diphosphate biosynthesis via DXP pathway; isopentenyl diphosphate from 1-deoxy-D-xylulose 5-phosphate: step 6/6. Its function is as follows. Catalyzes the conversion of 1-hydroxy-2-methyl-2-(E)-butenyl 4-diphosphate (HMBPP) into a mixture of isopentenyl diphosphate (IPP) and dimethylallyl diphosphate (DMAPP). Acts in the terminal step of the DOXP/MEP pathway for isoprenoid precursor biosynthesis. The protein is 4-hydroxy-3-methylbut-2-enyl diphosphate reductase of Xanthomonas campestris pv. campestris (strain 8004).